A 372-amino-acid chain; its full sequence is MWQAEVRVDLDAIRENVSWLRSGSAAELMAVVKGDGYGHGMVPAAHAALDGGADWLGVCTLDEALTLRRAGITVPVLAWLLAPGLPLHEGVTAGIDLGVASVAQLEEMVEAGRVAGRPARLHLKIDTGLSRGGATISEWPELLDAAAKAQADGAVEVVGVWSHFVYADAPGHPTTDRQLAVFHEGLGMVEKAGLRPRYRHLANSAATLTRPDAHFDLVRPGLAVYGLSPVAGERFGLRPAMTARARVMLTKQVPAGAGVSYGHTYTTDRASNLAVIPLGYADGVPRDASNSGPVQLGGVRRTISGRVCMDQFVLDCGDDPVAPGDVATLFGTGRDGEPTADDWAEAVGTINYEIVTRFGSTRVPRCYDGERP.

Residue lysine 33 is the Proton acceptor; specific for D-alanine of the active site. Lysine 33 bears the N6-(pyridoxal phosphate)lysine mark. Arginine 131 lines the substrate pocket. Tyrosine 261 acts as the Proton acceptor; specific for L-alanine in catalysis. Methionine 309 provides a ligand contact to substrate.

Belongs to the alanine racemase family. Pyridoxal 5'-phosphate serves as cofactor.

The enzyme catalyses L-alanine = D-alanine. It participates in amino-acid biosynthesis; D-alanine biosynthesis; D-alanine from L-alanine: step 1/1. In terms of biological role, catalyzes the interconversion of L-alanine and D-alanine. May also act on other amino acids. The polypeptide is Alanine racemase (alr) (Salinispora tropica (strain ATCC BAA-916 / DSM 44818 / JCM 13857 / NBRC 105044 / CNB-440)).